We begin with the raw amino-acid sequence, 513 residues long: Glutamate--tRNA ligase 2 (513 aa).

Positions Pro-11–Ser-21 match the 'HIGH' region motif. The 'KMSKS' region signature appears at Lys-240 to Arg-244. Lys-243 contributes to the ATP binding site.

This sequence belongs to the class-I aminoacyl-tRNA synthetase family. Glutamate--tRNA ligase type 1 subfamily. In terms of assembly, monomer.

The protein localises to the cytoplasm. The catalysed reaction is tRNA(Glu) + L-glutamate + ATP = L-glutamyl-tRNA(Glu) + AMP + diphosphate. Its function is as follows. Catalyzes the attachment of glutamate to tRNA(Glu) in a two-step reaction: glutamate is first activated by ATP to form Glu-AMP and then transferred to the acceptor end of tRNA(Glu). This chain is Glutamate--tRNA ligase 2, found in Rickettsia massiliae (strain Mtu5).